We begin with the raw amino-acid sequence, 397 residues long: Torsin-3A (397 aa).

The first 25 residues, 1–25, serve as a signal peptide directing secretion; sequence MLRGPWRQLWLFFLLLLPGAPEPRG. Asn-122 carries N-linked (GlcNAc...) asparagine glycosylation. ATP is bound at residue 167–174; it reads GWSGTGKN.

It belongs to the ClpA/ClpB family. Torsin subfamily. As to quaternary structure, may not form homohexamers. N-glycosylated. As to expression, ubiquitously expressed. Highest expression in stomach, salivary glands and lymph nodes. Isoform 2 is expressed in placenta.

Its subcellular location is the cytoplasm. It localises to the endoplasmic reticulum lumen. The protein is Torsin-3A (TOR3A) of Homo sapiens (Human).